Reading from the N-terminus, the 289-residue chain is Protease HtpX (289 aa).

2 consecutive transmembrane segments (helical) span residues 5-25 (IVLF…VMSL) and 33-53 (MSGL…ISLL). His140 contributes to the Zn(2+) binding site. Residue Glu141 is part of the active site. His144 provides a ligand contact to Zn(2+). 2 consecutive transmembrane segments (helical) span residues 155-175 (LLQG…GGFI) and 193-213 (GIVL…TMWF). Zn(2+) is bound at residue Glu218.

Belongs to the peptidase M48B family. It depends on Zn(2+) as a cofactor.

The protein resides in the cell inner membrane. This chain is Protease HtpX, found in Xylella fastidiosa (strain M23).